The following is a 428-amino-acid chain: GTPase Obg (428 aa).

Residues 1–158 enclose the Obg domain; sequence MFIDQVKIYV…RDVILELKVL (158 aa). Residues 159–329 form the OBG-type G domain; that stretch reads ADVGLVGFPS…LLFEVANLIE (171 aa). Residues 165–172, 190–194, 212–215, 282–285, and 310–312 each bind GTP; these read GFPSVGKS, FTTIV, DLPG, NKMD, and SAV. Mg(2+) is bound by residues Ser-172 and Thr-192. An OCT domain is found at 350–428; that stretch reads KFETEGVKFD…ILEYEFEFID (79 aa).

This sequence belongs to the TRAFAC class OBG-HflX-like GTPase superfamily. OBG GTPase family. Monomer. Mg(2+) serves as cofactor.

Its subcellular location is the cytoplasm. Functionally, an essential GTPase which binds GTP, GDP and possibly (p)ppGpp with moderate affinity, with high nucleotide exchange rates and a fairly low GTP hydrolysis rate. Plays a role in control of the cell cycle, stress response, ribosome biogenesis and in those bacteria that undergo differentiation, in morphogenesis control. This Bacillus anthracis protein is GTPase Obg.